The chain runs to 143 residues: Transcriptional regulator MraZ (143 aa).

SpoVT-AbrB domains are found at residues T5–E47 and T76–R119.

The protein belongs to the MraZ family. Forms oligomers.

The protein resides in the cytoplasm. It is found in the nucleoid. This Saccharopolyspora erythraea (strain ATCC 11635 / DSM 40517 / JCM 4748 / NBRC 13426 / NCIMB 8594 / NRRL 2338) protein is Transcriptional regulator MraZ.